Here is a 581-residue protein sequence, read N- to C-terminus: Myoneurin (581 aa).

The BTB domain occupies 24-89 (CDCTIVIGEF…IYTGTLNLDS (66 aa)). Residues 167–193 (PKQGALAKKSSQTKKKKKAFNSQKTGQ) are disordered. 2 consecutive short sequence motifs (nuclear localization signal) follow at residues 174–190 (KKSS…NSQK) and 256–261 (KRKRGK). Position 288 is a phosphoserine (Ser288). 7 consecutive C2H2-type zinc fingers follow at residues 301–323 (PMCN…MRIH), 329–351 (YVCH…VRTH), 357–380 (YKCE…RMHH), 386–408 (YKCD…ARKH), 414–436 (YVCD…VRRH), 442–464 (YVCD…SRKH), and 470–493 (FICE…TKVH).

It belongs to the krueppel C2H2-type zinc-finger protein family.

It is found in the nucleus. The chain is Myoneurin (MYNN) from Bos taurus (Bovine).